Here is a 365-residue protein sequence, read N- to C-terminus: IgG receptor FcRn large subunit p51 (365 aa).

An N-terminal signal peptide occupies residues 1–21; that stretch reads MGMPLPWALSLLLVLLPQTWG. Positions 22–110 are alpha-1; the sequence is SETRPPLMYH…KTLEKILNGT (89 aa). Residues 22-297 lie on the Extracellular side of the membrane; the sequence is SETRPPLMYH…VDLDSSARSS (276 aa). 4 N-linked (GlcNAc...) asparagine glycosylation sites follow: asparagine 108, asparagine 125, asparagine 149, and asparagine 246. The interval 111-200 is alpha-2; the sequence is YTLQGLLGCE…ERGRRNLEWK (90 aa). Cystine bridges form between cysteine 119/cysteine 182 and cysteine 221/cysteine 275. Residues 201 to 290 are alpha-3; that stretch reads EPPSMRLKAR…GLAQPLTVDL (90 aa). One can recognise an Ig-like C1-type domain in the interval 202–289; sequence PPSMRLKARP…EGLAQPLTVD (88 aa). Residues 291–297 are connecting peptide; it reads DSSARSS. The chain crosses the membrane as a helical span at residues 298 to 321; the sequence is VPVVGIVLGLLLVVVAIAGGVLLW. The Cytoplasmic portion of the chain corresponds to 322–365; the sequence is GRMRSGLPAPWLSLSGDDSGDLLPGGNLPPEAEPQGANAFPATS. Serine 334 is modified (phosphoserine). Residues 343–365 form a disordered region; the sequence is LLPGGNLPPEAEPQGANAFPATS.

It belongs to the immunoglobulin superfamily. In terms of assembly, fcRn complex consists of two subunits: p51, and p14 which is equivalent to beta-2-microglobulin. It forms an MHC class I-like heterodimer. Interacts with albumin/ALB; this interaction regulates ALB homeostasis. In terms of tissue distribution, intestinal epithelium of suckling rodents. Expressed in neonatal intestine and fetal yolk sac.

Its subcellular location is the cell membrane. The protein localises to the endosome membrane. Cell surface receptor that transfers passive humoral immunity from the mother to the newborn. Binds to the Fc region of monomeric immunoglobulin gamma and mediates its selective uptake from milk. IgG in the milk is bound at the apical surface of the intestinal epithelium. The resultant FcRn-IgG complexes are transcytosed across the intestinal epithelium and IgG is released from FcRn into blood or tissue fluids. Throughout life, contributes to effective humoral immunity by recycling IgG and extending its half-life in the circulation. Mechanistically, monomeric IgG binding to FcRn in acidic endosomes of endothelial and hematopoietic cells recycles IgG to the cell surface where it is released into the circulation. In addition of IgG, regulates homeostasis of the other most abundant circulating protein albumin/ALB. The protein is IgG receptor FcRn large subunit p51 (Fcgrt) of Mus musculus (Mouse).